Reading from the N-terminus, the 148-residue chain is Large ribosomal subunit protein uL15 (148 aa).

Positions 18–38 (GYGRVGKHRKHPGGRGNAGGL) are disordered.

The protein belongs to the universal ribosomal protein uL15 family.

The polypeptide is Large ribosomal subunit protein uL15 (rpl27a) (Dictyostelium discoideum (Social amoeba)).